The chain runs to 364 residues: Anthranilate phosphoribosyltransferase (364 aa).

A compositionally biased stretch (polar residues) spans 1–10; sequence MTSGPSQPFP. Residues 1–22 are disordered; the sequence is MTSGPSQPFPSASGPDDGPSWP. Residues Gly-101, 104-105, Thr-109, 111-114, 129-137, and Gly-141 each bind 5-phospho-alpha-D-ribose 1-diphosphate; these read GD, NLST, and KHGNRAASS. Gly-101 is an anthranilate binding site. Ser-113 provides a ligand contact to Mg(2+). Residue Asn-132 coordinates anthranilate. Anthranilate is bound at residue Arg-187. The Mg(2+) site is built by Asp-245 and Glu-246.

Belongs to the anthranilate phosphoribosyltransferase family. In terms of assembly, homodimer. Requires Mg(2+) as cofactor.

The catalysed reaction is N-(5-phospho-beta-D-ribosyl)anthranilate + diphosphate = 5-phospho-alpha-D-ribose 1-diphosphate + anthranilate. It participates in amino-acid biosynthesis; L-tryptophan biosynthesis; L-tryptophan from chorismate: step 2/5. Functionally, catalyzes the transfer of the phosphoribosyl group of 5-phosphorylribose-1-pyrophosphate (PRPP) to anthranilate to yield N-(5'-phosphoribosyl)-anthranilate (PRA). This is Anthranilate phosphoribosyltransferase from Mycolicibacterium smegmatis (strain ATCC 700084 / mc(2)155) (Mycobacterium smegmatis).